The sequence spans 385 residues: Citrate synthase (385 aa).

Active-site residues include H223, H263, and D318.

This sequence belongs to the citrate synthase family. Homodimer.

The enzyme catalyses oxaloacetate + acetyl-CoA + H2O = citrate + CoA + H(+). It functions in the pathway carbohydrate metabolism; tricarboxylic acid cycle; isocitrate from oxaloacetate: step 1/2. With respect to regulation, allosterically inhibited by NADH. This is Citrate synthase (gltA) from Thermoplasma acidophilum (strain ATCC 25905 / DSM 1728 / JCM 9062 / NBRC 15155 / AMRC-C165).